A 411-amino-acid polypeptide reads, in one-letter code: Na(+)-translocating NADH-quinone reductase subunit F (411 aa).

A helical transmembrane segment spans residues 5–25 (VILALGIAAFTVIVLVLVAII). The 2Fe-2S ferredoxin-type domain maps to 36–130 (GDITIDINDD…NMEVELPEEI (95 aa)). Positions 73, 79, 82, and 114 each coordinate [2Fe-2S] cluster. One can recognise an FAD-binding FR-type domain in the interval 133–273 (VKKWECTVIS…SGPFGEFFAK (141 aa)).

This sequence belongs to the NqrF family. As to quaternary structure, composed of six subunits; NqrA, NqrB, NqrC, NqrD, NqrE and NqrF. Requires [2Fe-2S] cluster as cofactor. It depends on FAD as a cofactor.

Its subcellular location is the cell inner membrane. The enzyme catalyses a ubiquinone + n Na(+)(in) + NADH + H(+) = a ubiquinol + n Na(+)(out) + NAD(+). In terms of biological role, NQR complex catalyzes the reduction of ubiquinone-1 to ubiquinol by two successive reactions, coupled with the transport of Na(+) ions from the cytoplasm to the periplasm. The first step is catalyzed by NqrF, which accepts electrons from NADH and reduces ubiquinone-1 to ubisemiquinone by a one-electron transfer pathway. This is Na(+)-translocating NADH-quinone reductase subunit F from Haemophilus influenzae (strain PittGG).